The sequence spans 363 residues: NAD-dependent epimerase/dehydratase tndE (363 aa).

The helical transmembrane segment at 10 to 30 (GLVLITGVNGFLASHLALQLI) threads the bilayer. NADP(+) is bound at residue Y176.

This sequence belongs to the NAD(P)-dependent epimerase/dehydratase family. Dihydroflavonol-4-reductase subfamily.

Its subcellular location is the membrane. It participates in secondary metabolite biosynthesis; terpenoid biosynthesis. Its function is as follows. NAD-dependent epimerase/dehydratase; part of the gene cluster that mediates the biosynthesis of talaronoid C, a fusicoccane diterpenoid with an unprecedented tricyclic 5/8/6 ring system. The first step in the pathway is performed by the fusicoccadiene synthase tndC that possesses both prenyl transferase and terpene cyclase activity, converting isopentenyl diphosphate and dimethylallyl diphosphate into geranylgeranyl diphosphate (GGDP) and further converting GGDP into talarodiene, a precursor for talaronoid C. The remaining enzymes from the cluster include the cytochrome P450 monooxygenase tndB, the aldehyde reductase tndE and the alcohol dehydrogenase tndF that are involved in the conversion of talarodiene into talaronoid C. The sequence is that of NAD-dependent epimerase/dehydratase tndE from Aspergillus flavipes.